The following is a 1029-amino-acid chain: Multiple C2 domain and transmembrane region protein 6 (1029 aa).

Residues 1-111 (MNKLVVEIVD…SGVQRYPLDK (111 aa)) enclose the C2 1 domain. A disordered region spans residues 187–224 (TKKKEKESRTFHSIGAHAGGGGGAPPMSQAKQAYPPPP). C2 domains are found at residues 277–398 (RSSG…PQWY), 437–562 (RVSH…PRWF), and 605–727 (FSSD…THFY). Ca(2+) is bound by residues aspartate 310, aspartate 316, aspartate 363, aspartate 365, and aspartate 371. A run of 2 helical transmembrane segments spans residues 864–884 (LILV…LFVI) and 976–996 (FALI…AIII).

This sequence belongs to the MCTP family. The cofactor is Ca(2+). Expressed in the vascular tissues of cotyledons and rosette leaves. Accumulates in roots caps and shoot apical meristems (SAMs). Observed in flowers.

It is found in the cell membrane. The protein localises to the cytoplasm. It localises to the endosome membrane. Functionally, regulates flowering time under long days. May function as a signaling molecule by regulating the trafficking of other regulators. The chain is Multiple C2 domain and transmembrane region protein 6 from Arabidopsis thaliana (Mouse-ear cress).